The following is a 227-amino-acid chain: Phosphoribosylformylglycinamidine synthase subunit PurQ (227 aa).

One can recognise a Glutamine amidotransferase type-1 domain in the interval 3-227 (FAVIVFPGSN…NWRESHVTAS (225 aa)). Residue Cys-86 is the Nucleophile of the active site. Active-site residues include His-194 and Glu-196.

As to quaternary structure, part of the FGAM synthase complex composed of 1 PurL, 1 PurQ and 2 PurS subunits.

Its subcellular location is the cytoplasm. The catalysed reaction is N(2)-formyl-N(1)-(5-phospho-beta-D-ribosyl)glycinamide + L-glutamine + ATP + H2O = 2-formamido-N(1)-(5-O-phospho-beta-D-ribosyl)acetamidine + L-glutamate + ADP + phosphate + H(+). The enzyme catalyses L-glutamine + H2O = L-glutamate + NH4(+). It participates in purine metabolism; IMP biosynthesis via de novo pathway; 5-amino-1-(5-phospho-D-ribosyl)imidazole from N(2)-formyl-N(1)-(5-phospho-D-ribosyl)glycinamide: step 1/2. In terms of biological role, part of the phosphoribosylformylglycinamidine synthase complex involved in the purines biosynthetic pathway. Catalyzes the ATP-dependent conversion of formylglycinamide ribonucleotide (FGAR) and glutamine to yield formylglycinamidine ribonucleotide (FGAM) and glutamate. The FGAM synthase complex is composed of three subunits. PurQ produces an ammonia molecule by converting glutamine to glutamate. PurL transfers the ammonia molecule to FGAR to form FGAM in an ATP-dependent manner. PurS interacts with PurQ and PurL and is thought to assist in the transfer of the ammonia molecule from PurQ to PurL. The polypeptide is Phosphoribosylformylglycinamidine synthase subunit PurQ (Shouchella clausii (strain KSM-K16) (Alkalihalobacillus clausii)).